Consider the following 397-residue polypeptide: Ubiquitin-like modifier-activating enzyme 5 (397 aa).

5 residues coordinate ATP: Gly-76, Asp-97, Lys-120, Asn-143, and Asn-177. Residues Cys-219 and Cys-222 each coordinate Zn(2+). Cys-243 functions as the Glycyl thioester intermediate in the catalytic mechanism. Zn(2+) contacts are provided by Cys-296 and Cys-301. The UFM1-interacting sequence (UIS) signature appears at 327–339; the sequence is IVHEDNDWGIELV. The segment at 340-370 is linker; it reads SETTEDELKAASGPVPDLPVGITVAYTIPNK. The short motif at 382 to 397 is the UFC1-binding sequence (UFC) element; sequence ESEESLEDLMAKMRNL.

The protein belongs to the ubiquitin-activating E1 family. UBA5 subfamily. As to quaternary structure, homodimer; homodimerization is required for UFM1 activation. Interacts (via UIS motif) with UFM1; binds UFM1 via a trans-binding mechanism in which UFM1 interacts with distinct sites in both subunits of the UBA5 homodimer. Interacts (via C-terminus) with UFC1.

The protein localises to the cytoplasm. Its subcellular location is the nucleus. It localises to the endoplasmic reticulum membrane. It is found in the golgi apparatus. In terms of biological role, E1-like enzyme which specifically catalyzes the first step in ufmylation. Activates UFM1 by first adenylating its C-terminal glycine residue with ATP, and thereafter linking this residue to the side chain of a cysteine residue in E1, yielding a UFM1-E1 thioester and free AMP. Activates UFM1 via a trans-binding mechanism, in which UFM1 interacts with distinct sites in both subunits of the UBA5 homodimer. Trans-binding also promotes stabilization of the UBA5 homodimer, and enhances ATP-binding. Transfer of UFM1 from UBA5 to the E2-like enzyme UFC1 also takes place using a trans mechanism. Ufmylation plays a key role in various processes, such as ribosome recycling, response to DNA damage, interferon response or reticulophagy (also called ER-phagy). The polypeptide is Ubiquitin-like modifier-activating enzyme 5 (Gallus gallus (Chicken)).